Consider the following 117-residue polypeptide: Large ribosomal subunit protein uL18 (117 aa).

The protein belongs to the universal ribosomal protein uL18 family. As to quaternary structure, part of the 50S ribosomal subunit; part of the 5S rRNA/L5/L18/L25 subcomplex. Contacts the 5S and 23S rRNAs.

Functionally, this is one of the proteins that bind and probably mediate the attachment of the 5S RNA into the large ribosomal subunit, where it forms part of the central protuberance. This chain is Large ribosomal subunit protein uL18, found in Francisella tularensis subsp. tularensis (strain FSC 198).